Reading from the N-terminus, the 144-residue chain is MIALIQRVTRAQVDVDGKTAGKIGKGLLVLLGVEKEDNQARANKLAEKVLNYRVFGDENDKMNLNVRQAQGELLVVSQFTLVADTGRGLRPSFSNGATPALADELYRYFIRKCREKIQVETGEFAANMQVSLTNDGPVTFWLQS.

A Gly-cisPro motif, important for rejection of L-amino acids motif is present at residues 136 to 137 (GP).

This sequence belongs to the DTD family. As to quaternary structure, homodimer.

It is found in the cytoplasm. It carries out the reaction glycyl-tRNA(Ala) + H2O = tRNA(Ala) + glycine + H(+). The catalysed reaction is a D-aminoacyl-tRNA + H2O = a tRNA + a D-alpha-amino acid + H(+). In terms of biological role, an aminoacyl-tRNA editing enzyme that deacylates mischarged D-aminoacyl-tRNAs. Also deacylates mischarged glycyl-tRNA(Ala), protecting cells against glycine mischarging by AlaRS. Acts via tRNA-based rather than protein-based catalysis; rejects L-amino acids rather than detecting D-amino acids in the active site. By recycling D-aminoacyl-tRNA to D-amino acids and free tRNA molecules, this enzyme counteracts the toxicity associated with the formation of D-aminoacyl-tRNA entities in vivo and helps enforce protein L-homochirality. The sequence is that of D-aminoacyl-tRNA deacylase from Actinobacillus succinogenes (strain ATCC 55618 / DSM 22257 / CCUG 43843 / 130Z).